The sequence spans 363 residues: Ethanol acetyltransferase 1 (363 aa).

The transit peptide at 1 to 19 directs the protein to the mitochondrion; sequence MLLAYTVRPSNWSFTRRAY. Positions 65 to 164 constitute an AB hydrolase-1 domain; sequence PIIFYHGLLG…FSAACIIDNS (100 aa). Catalysis depends on charge relay system residues serine 138, aspartate 162, and histidine 313.

This sequence belongs to the AB hydrolase superfamily.

It localises to the mitochondrion. It carries out the reaction ethanol + acetyl-CoA = ethyl acetate + CoA. The enzyme catalyses acetyl-CoA + H2O = acetate + CoA + H(+). It catalyses the reaction ethyl acetate + H2O = ethanol + acetate + H(+). Its function is as follows. Alcohol acetyltransferase that catalyzes the synthesis of ethyl acetate from ethanol and acetyl-CoA. Can also function as a thioesterase by hydrolyzing acetyl-CoA in the absence of ethanol, as well as esterase hydrolyzing ethyl acetate. This Kluyveromyces marxianus (strain DMKU3-1042 / BCC 29191 / NBRC 104275) (Yeast) protein is Ethanol acetyltransferase 1 (EAT1).